The chain runs to 2662 residues: Centrosome-associated protein CEP250L1 (2662 aa).

2 coiled-coil regions span residues 1030-1248 (KVHY…EEEE) and 1281-1719 (ARTH…IDAQ).

Its subcellular location is the cytoplasm. The protein resides in the cytoskeleton. It localises to the microtubule organizing center. The protein localises to the centrosome. In terms of biological role, part of the centrosome inner core complex. Plays a role in the formation and/or stabilization of the mitotic spindle. Required for proper nuclear segregation and DNA partitioning during cell division. This chain is Centrosome-associated protein CEP250L1, found in Toxoplasma gondii (strain ATCC 50611 / Me49).